Reading from the N-terminus, the 785-residue chain is Penicillin-binding protein 1A (785 aa).

The segment at 1–61 is disordered; sequence MPPDDRLTAV…SGPGGPSGPG (61 aa). Residues 33–45 show a composition bias toward pro residues; that stretch reads SPPPKPPPPPPPG. Over residues 46-59 the composition is skewed to gly residues; sequence RGGGGPSGPGGPSG. A helical transmembrane segment spans residues 77-97; the sequence is IAVAVMVLLPLITFGMAYMIV. The transglycosylase stretch occupies residues 118 to 299; sequence GSEIARIVPP…RWNWVLDGMV (182 aa). Catalysis depends on E151, which acts as the Proton donor; for transglycosylase activity. Residues 392 to 662 are transpeptidase; the sequence is AVVSIDPRTG…EGVKPLVNKW (271 aa). Catalysis depends on S426, which acts as the Acyl-ester intermediate; for transpeptidase activity. Disordered regions lie at residues 605-626, 690-726, and 738-785; these read SRGHNLAGGRPSAAKTGTVQLG, ESFPKPTEIGGYAGVPQAPAAPPPSAGPPTDPGQPSV, and GITI…PPPP. Composition is skewed to pro residues over residues 708-721 and 743-758; these read PAAPPPSAGPPTDP and IGPPTTVPVGPPPGAP. A compositionally biased stretch (low complexity) spans 759–775; it reads GAPVGPGAPEVPVAPGA.

The protein localises to the cell membrane. The enzyme catalyses [GlcNAc-(1-&gt;4)-Mur2Ac(oyl-L-Ala-gamma-D-Glu-L-Lys-D-Ala-D-Ala)](n)-di-trans,octa-cis-undecaprenyl diphosphate + beta-D-GlcNAc-(1-&gt;4)-Mur2Ac(oyl-L-Ala-gamma-D-Glu-L-Lys-D-Ala-D-Ala)-di-trans,octa-cis-undecaprenyl diphosphate = [GlcNAc-(1-&gt;4)-Mur2Ac(oyl-L-Ala-gamma-D-Glu-L-Lys-D-Ala-D-Ala)](n+1)-di-trans,octa-cis-undecaprenyl diphosphate + di-trans,octa-cis-undecaprenyl diphosphate + H(+). The catalysed reaction is Preferential cleavage: (Ac)2-L-Lys-D-Ala-|-D-Ala. Also transpeptidation of peptidyl-alanyl moieties that are N-acyl substituents of D-alanine.. The protein operates within cell wall biogenesis; peptidoglycan biosynthesis. Functionally, cell wall formation. Synthesis of cross-linked peptidoglycan from the lipid intermediates. The enzyme has a penicillin-insensitive transglycosylase N-terminal domain (formation of linear glycan strands) and a penicillin-sensitive transpeptidase C-terminal domain (cross-linking of the peptide subunits). The protein is Penicillin-binding protein 1A (ponA1) of Mycolicibacterium smegmatis (strain ATCC 700084 / mc(2)155) (Mycobacterium smegmatis).